The sequence spans 318 residues: MERERLIKTVEAILRGAGYRVARLDLKGSCFDLVASRLFLLLFIKATVNIDTITEEQAEDLKRLAKFFKASPLIVGLRSKSGELEEGVVYERFGIYALRPETLYDALLNNELPAVFAERGGLYVRINGELLRELREKHGYSVNELAQLLGVSRKSLLNYERGEQAVSLDVAIQLEEIFDEALAEPIDILRAKVEADLNVKPETPLEREVFERLKKLGLGLVKVKKAPFNAISTEDDIRLLTGIDERKTRSTIKRAEMVAEVGRIVNSGGVFILEKTKAEVVSEVPLIPKESLEEVKDADELIELIDKLKKEIKEKLFS.

The HTH cro/C1-type domain maps to 131–189 (LRELREKHGYSVNELAQLLGVSRKSLLNYERGEQAVSLDVAIQLEEIFDEALAEPIDIL). Positions 142–161 (VNELAQLLGVSRKSLLNYER) form a DNA-binding region, H-T-H motif.

The protein is Putative HTH-type transcriptional regulatory protein TK0539 of Thermococcus kodakarensis (strain ATCC BAA-918 / JCM 12380 / KOD1) (Pyrococcus kodakaraensis (strain KOD1)).